The chain runs to 631 residues: KIF-binding protein (631 aa).

The span at 60–70 (EQGEAGDEADC) shows a compositional bias: acidic residues. Residues 60-88 (EQGEAGDEADCESSQTADGEPEDGFEKTF) are disordered.

It belongs to the KIF-binding protein family. In terms of tissue distribution, at 30 hpf, primarily expressed in central and peripheral neurons.

The protein resides in the cytoplasm. Its subcellular location is the cytoskeleton. Functionally, activator of KIF1B plus-end-directed microtubule motor activity. Required for organization of axonal microtubules, and axonal outgrowth and maintenance during peripheral and central nervous system development. This chain is KIF-binding protein (kifbp), found in Danio rerio (Zebrafish).